Consider the following 132-residue polypeptide: Fatty acid-binding protein type 3 (132 aa).

Belongs to the calycin superfamily. Fatty-acid binding protein (FABP) family.

This is Fatty acid-binding protein type 3 from Fasciola hepatica (Liver fluke).